The following is a 198-amino-acid chain: Probable nicotinate-nucleotide adenylyltransferase (198 aa).

Belongs to the NadD family.

It catalyses the reaction nicotinate beta-D-ribonucleotide + ATP + H(+) = deamido-NAD(+) + diphosphate. It functions in the pathway cofactor biosynthesis; NAD(+) biosynthesis; deamido-NAD(+) from nicotinate D-ribonucleotide: step 1/1. Its function is as follows. Catalyzes the reversible adenylation of nicotinate mononucleotide (NaMN) to nicotinic acid adenine dinucleotide (NaAD). The protein is Probable nicotinate-nucleotide adenylyltransferase of Chlorobium limicola (strain DSM 245 / NBRC 103803 / 6330).